The chain runs to 33 residues: MSDIN-like toxin proprotein 2 (33 aa).

The propeptide occupies 1–10; the sequence is MSDINATRLP. Positions 11–18 form a cross-link, cyclopeptide (Ile-Pro); that stretch reads IILAPIIP. Positions 19 to 33 are excised as a propeptide; sequence CINDDVNSTLTSGER.

It belongs to the MSDIN fungal toxin family. Processed by the macrocyclase-peptidase enzyme POPB to yield a toxic cyclic octapeptide. POPB first removes 10 residues from the N-terminus. Conformational trapping of the remaining peptide forces the enzyme to release this intermediate rather than proceed to macrocyclization. The enzyme rebinds the remaining peptide in a different conformation and catalyzes macrocyclization of the N-terminal 8 residues.

Functionally, probable toxin that belongs to the MSDIN-like toxin family responsible for a large number of food poisoning cases and deaths. This is MSDIN-like toxin proprotein 2 from Amanita phalloides (Death cap).